Reading from the N-terminus, the 101-residue chain is Capsid assembly scaffolding protein (101 aa).

Residues methionine 1–glutamate 24 are disordered. A coiled-coil region spans residues glutamate 79 to alanine 99.

This sequence belongs to the phi29likevirus scaffolding protein family. Homodimer. Interacts non-specifically with DNA; probably binds DNA in the early stages of DNA packaging.

Its function is as follows. Scaffolding protein involved in the icosahedric procapsid assembly. Coassembles with the capsid proteins to form the procapsid. The scaffolding protein is found within the capsid as a serie of concentric shells. During DNA packaging, the scaffolding protein molecules are released from the procapsid. The protein is Capsid assembly scaffolding protein (7) of Bacillus subtilis (Bacteriophage B103).